A 341-amino-acid polypeptide reads, in one-letter code: Aromatic amino acid aminotransferase (341 aa).

Lys-213 is subject to N6-(pyridoxal phosphate)lysine.

This sequence belongs to the class-II pyridoxal-phosphate-dependent aminotransferase family. Homodimer. Requires pyridoxal 5'-phosphate as cofactor.

It catalyses the reaction an aromatic L-alpha-amino acid + 2-oxoglutarate = an aromatic oxo-acid + L-glutamate. In terms of biological role, aminotransferase that catalyzes the conversion of aromatic amino acids and 2-oxoglutarate into corresponding aromatic oxo acids and L-glutamate. The polypeptide is Aromatic amino acid aminotransferase (Corynebacterium glutamicum (strain R)).